The chain runs to 478 residues: Sialidase-4 (478 aa).

Residues 22–25 carry the FRIP motif motif; it reads YRVP. 2 residues coordinate substrate: R23 and R43. Residues D47 and D48 each act as proton acceptor in the active site. The BNR 1 repeat unit spans residues 127–138; sequence VTSCDAGLTWGS. Substrate-binding residues include Y177 and Y179. A BNR 2 repeat occupies 200–211; that stretch reads FYSDDHGISWHC. Substrate-binding residues include E222 and R238. One copy of the BNR 3 repeat lies at 247-258; the sequence is ALSADEGTSFLP. Disordered regions lie at residues 285 to 307 and 335 to 359; these read IEPQ…CFNL and SRSP…PECP. R383 serves as a coordination point for substrate. Y413 serves as the catalytic Nucleophile. E434 is a catalytic residue.

Belongs to the glycosyl hydrolase 33 family. As to expression, highly expressed in brain, particularly in hippocampus, and at lower levels in liver and spleen. Expressed in hippocampal neurons (at protein level).

The protein localises to the cell membrane. Its subcellular location is the endoplasmic reticulum membrane. It localises to the microsome membrane. The protein resides in the mitochondrion inner membrane. It is found in the mitochondrion outer membrane. The protein localises to the cell projection. Its subcellular location is the neuron projection. It localises to the lysosome lumen. It catalyses the reaction Hydrolysis of alpha-(2-&gt;3)-, alpha-(2-&gt;6)-, alpha-(2-&gt;8)- glycosidic linkages of terminal sialic acid residues in oligosaccharides, glycoproteins, glycolipids, colominic acid and synthetic substrates.. It carries out the reaction a ganglioside GM3 + H2O = a beta-D-galactosyl-(1-&gt;4)-beta-D-glucosyl-(1&lt;-&gt;1)-ceramide + N-acetylneuraminate. The enzyme catalyses a ganglioside GM3 (d18:1(4E)) + H2O = a beta-D-Gal-(1-&gt;4)-beta-D-Glc-(1&lt;-&gt;1)-Cer(d18:1(4E)) + N-acetylneuraminate. The catalysed reaction is a ganglioside GM2 + H2O = a ganglioside GA2 + N-acetylneuraminate. It catalyses the reaction a ganglioside GM2 (d18:1(4E)) + H2O = a ganglioside GA2 (d18:1(4E)) + N-acetylneuraminate. It carries out the reaction a ganglioside GD1a + H2O = a ganglioside GM1 + N-acetylneuraminate. The enzyme catalyses a ganglioside GD1a (d18:1(4E)) + H2O = a ganglioside GM1 (d18:1(4E)) + N-acetylneuraminate. The catalysed reaction is a ganglioside GD3 + H2O = a ganglioside GM3 + N-acetylneuraminate. It catalyses the reaction a ganglioside GD3 (d18:1(4E)) + H2O = a ganglioside GM3 (d18:1(4E)) + N-acetylneuraminate. Exo-alpha-sialidase that catalyzes the hydrolytic cleavage of the terminal sialic acid (N-acetylneuraminic acid, Neu5Ac) of a glycan moiety in the catabolism of glycolipids, glycoproteins and oligosacharides. Efficiently hydrolyzes gangliosides including alpha-(2-&gt;3)-sialylated GD1a and GM3 and alpha-(2-&gt;8)-sialylated GD3. Hydrolyzes poly-alpha-(2-&gt;8)-sialylated neural cell adhesion molecule NCAM1 likely at growth cones, suppressing neurite outgrowth in hippocampal neurons. May desialylate sialyl Lewis A and X antigens at the cell surface, down-regulating these glycan epitopes recognized by SELE/E selectin in the initiation of cell adhesion and extravasation. Has sialidase activity toward mucin, fetuin and sialyllactose. In Mus musculus (Mouse), this protein is Sialidase-4 (Neu4).